Consider the following 745-residue polypeptide: Prolyl oligopeptidase ophP (745 aa).

Active-site charge relay system residues include Ser-580, Asp-665, and His-701.

The protein belongs to the peptidase S9A family. As to quaternary structure, monomer.

It carries out the reaction Hydrolysis of Pro-|-Xaa &gt;&gt; Ala-|-Xaa in oligopeptides.. It participates in mycotoxin biosynthesis. In terms of biological role, prolyl oligopeptidase; part of the gene cluster that mediates the biosynthesis of omphalotin A, a highly methylated cyclic dodecapeptide with nematodicidal activity. Excises and catalyzes the macrocyclization of the methylated core peptide of OphMA to yield omphalotin A. OphP works in a two-step fashion with an initial cleavage at the N-terminus, followed by a second cleavage at the C-terminus of the core peptide. According to this mechanism, the free N-terminus of the core peptide, generated by the first cleavage, attacks the covalent intermediate of the second cleavage, which results in macrocyclization of the core peptide. This chain is Prolyl oligopeptidase ophP, found in Omphalotus olearius (Jack o'lantern).